A 419-amino-acid polypeptide reads, in one-letter code: MDLETKMKKMGLGHEQGFGAPCLKCKENCEGFELHFWRKICRNCKCGQEEHDVLLSTEEDRKVGRLFEDTKYTTLIAKLKSDGIPMYKRNVMILTNPVAAKKNVSINTVTYEWAPPVQNQALARQYMQMLPKEKQPVAGSEGAQYRKKQLAKQLPAHDQDPSKCHELSPKEVKEMEQFVKKYKSEALGVGDVKLPSEMNAQGDKVHNPAGDRNTPAAVGSKDKSAEAKKTQYSCYCCKNTMREGDPAIYAERAGYDKLWHPACFICSTCGELLVDMIYFWKNGKLYCGRHYCDSEKPRCAGCDELIFSNEYTQAENQNWHLKHFCCFDCDNILAGKIYVMVRDKPVCKPCYVKNHAVVCQGCHNAIDPEVQRVTYNNFSWHASTECFLCSCCSKCLIGQKFMPVEGMVFCSVECKKMMS.

The 108-residue stretch at 92 to 199 folds into the PET domain; the sequence is MILTNPVAAK…GDVKLPSEMN (108 aa). 2 disordered regions span residues 133–164 and 199–222; these read EKQP…PSKC and NAQG…GSKD. Residues 155-164 show a composition bias toward basic and acidic residues; that stretch reads PAHDQDPSKC. 3 LIM zinc-binding domains span residues 232 to 295, 297 to 357, and 360 to 419; these read YSCY…CDSE, PRCA…NHAV, and QGCH…KMMS.

The protein belongs to the prickle / espinas / testin family. As to quaternary structure, interacts via LIM domain 1 with ZYX. Interacts (via LIM domain 3) with ENAH and VASP. Interacts with ALKBH4, talin, actin, alpha-actinin, GRIP1 and PXN. Interacts (via LIM domain 2) with ACTL7A (via N-terminus). Heterodimer with ACTL7A; the heterodimer interacts with ENAH to form a heterotrimer.

The protein resides in the cytoplasm. It is found in the cell junction. Its subcellular location is the focal adhesion. Functionally, scaffold protein that may play a role in cell adhesion, cell spreading and in the reorganization of the actin cytoskeleton. Plays a role in the regulation of cell proliferation. May act as a tumor suppressor. This Rattus norvegicus (Rat) protein is Testin (Tes).